The following is a 122-amino-acid chain: Small ribosomal subunit protein uS13 (122 aa).

The tract at residues 95-122 (GLPVRGQRTHTNARTRKGPAKPIAGKKK) is disordered.

This sequence belongs to the universal ribosomal protein uS13 family. As to quaternary structure, part of the 30S ribosomal subunit. Forms a loose heterodimer with protein S19. Forms two bridges to the 50S subunit in the 70S ribosome.

In terms of biological role, located at the top of the head of the 30S subunit, it contacts several helices of the 16S rRNA. In the 70S ribosome it contacts the 23S rRNA (bridge B1a) and protein L5 of the 50S subunit (bridge B1b), connecting the 2 subunits; these bridges are implicated in subunit movement. Contacts the tRNAs in the A and P-sites. This chain is Small ribosomal subunit protein uS13, found in Rhodospirillum rubrum (strain ATCC 11170 / ATH 1.1.1 / DSM 467 / LMG 4362 / NCIMB 8255 / S1).